The chain runs to 185 residues: uncharacterized protein (185 aa).

The protein to M.thermoautotrophicum MTH236.

This is an uncharacterized protein from Methanocaldococcus jannaschii (strain ATCC 43067 / DSM 2661 / JAL-1 / JCM 10045 / NBRC 100440) (Methanococcus jannaschii).